Reading from the N-terminus, the 291-residue chain is ATP phosphoribosyltransferase (291 aa).

This sequence belongs to the ATP phosphoribosyltransferase family. Long subfamily. Mg(2+) serves as cofactor.

It localises to the cytoplasm. It catalyses the reaction 1-(5-phospho-beta-D-ribosyl)-ATP + diphosphate = 5-phospho-alpha-D-ribose 1-diphosphate + ATP. The protein operates within amino-acid biosynthesis; L-histidine biosynthesis; L-histidine from 5-phospho-alpha-D-ribose 1-diphosphate: step 1/9. Feedback inhibited by histidine. In terms of biological role, catalyzes the condensation of ATP and 5-phosphoribose 1-diphosphate to form N'-(5'-phosphoribosyl)-ATP (PR-ATP). Has a crucial role in the pathway because the rate of histidine biosynthesis seems to be controlled primarily by regulation of HisG enzymatic activity. The protein is ATP phosphoribosyltransferase of Geotalea uraniireducens (strain Rf4) (Geobacter uraniireducens).